The sequence spans 372 residues: 1,3,6,8-tetrahydroxynaphthalene synthase (372 aa).

Residue cysteine 138 is part of the active site.

This sequence belongs to the thiolase-like superfamily. Chalcone/stilbene synthases family. Homodimer.

The catalysed reaction is 5 malonyl-CoA + 5 H(+) = naphthalene-1,3,6,8-tetrol + 5 CO2 + 5 CoA + H2O. Its pathway is pigment biosynthesis; melanin biosynthesis. In terms of biological role, involved in the biosynthesis of melanin but also various secondary metabolites containing a naphthoquinone ring. Catalyzes the iterative condensation of five CoA-linked malonyl units to form a pentaketide intermediate. THNS subsequently catalyzes the dual intramolecular Claisen and aldol condensations of this linear intermediate to produce the fused ring of 1,3,6,8-tetrahydroxynaphthalene (THN). In Streptomyces griseus, this protein is 1,3,6,8-tetrahydroxynaphthalene synthase.